A 576-amino-acid chain; its full sequence is Insulin-like growth factor 2 mRNA-binding protein 1 (576 aa).

RRM domains are found at residues 2-75 (NKLY…HSVP) and 81-156 (RKIQ…YIPD). Residues 158–189 (QSVQGPENGRRGGFGARGAPRQGSPVTAGAPV) are disordered. 2 consecutive KH domains span residues 195-260 (DIPL…CKMI) and 276-343 (EVPL…EQEI). Residue tyrosine 396 is modified to Phosphotyrosine; by SRC. KH domains lie at 404–469 (QETV…QGRI) and 486–552 (KLET…QRKI).

This sequence belongs to the RRM IMP/VICKZ family. In terms of assembly, can form homooligomers and heterooligomers with IGF2BP1 and IGF2BP3 in an RNA-dependent manner. Associates with the cytoskeleton, predominantly with actin filament bundles and occasionally with microtubules. In a heterologous system, interacts with ELAVL1, DHX9 and HNRNPU. Phosphorylated by SRC at Tyr-396. This residue is involved in ACTB mRNA binding, its phosphorylation impairs association with ACTB mRNA and hence abolishes translational repression. Phosphorylation occurs in close proximity to filopodia and in the growth cones of differentiated neuroglioblastoma cells. Expressed in neurons and embryonic fibroblasts (at protein level).

It localises to the nucleus. Its subcellular location is the cytoplasm. The protein localises to the perinuclear region. The protein resides in the P-body. It is found in the stress granule. It localises to the cell projection. Its subcellular location is the growth cone. The protein localises to the filopodium. The protein resides in the lamellipodium. Functionally, RNA-binding factor that recruits target transcripts to cytoplasmic protein-RNA complexes (mRNPs). This transcript 'caging' into mRNPs allows mRNA transport and transient storage. It also modulates the rate and location at which target transcripts encounter the translational apparatus and shields them from endonuclease attacks or microRNA-mediated degradation. Preferentially binds to N6-methyladenosine (m6A)-containing mRNAs and increases their stability. Plays a direct role in the transport and translation of transcripts required for axonal regeneration in adult sensory neurons. Regulates localized beta-actin/ACTB mRNA translation in polarized cells, a crucial process for cell migration and neurite outgrowth. Co-transcriptionally associates with the ACTB mRNA in the nucleus. This binding involves by a conserved 54-nucleotide element in the ACTB mRNA 3'-UTR, known as the 'zipcode'. The ribonucleoparticle (RNP) thus formed is exported to the cytoplasm, binds to a motor protein and is transported along the cytoskeleton to the cell periphery. During transport, IGF2BP1 prevents beta-actin mRNA from being translated into protein. When the RNP complex reaches its destination near the plasma membrane, IGF2BP1 is phosphorylated by SRC. This releases the mRNA, allowing ribosomal 40S and 60S subunits to assemble and initiate ACTB protein synthesis. The monomeric ACTB protein then assembles into the subcortical actin cytoskeleton, which pushes the leading edge onwards. Binds MYC mRNA. Binding to MYC mRNA is enhanced by m6A-modification of the CRD. Promotes the directed movement of cells by fine-tuning intracellular signaling networks. Binds to MAPK4 3'-UTR and inhibits its translation. Interacts with PTEN transcript open reading frame (ORF) and prevents mRNA decay. This combined action on MAPK4 (down-regulation) and PTEN (up-regulation) antagonizes HSPB1 phosphorylation, consequently it prevents G-actin sequestration by phosphorylated HSPB1, allowing F-actin polymerization. Hence enhances the velocity of cell migration and stimulates directed cell migration by PTEN-modulated polarization. This chain is Insulin-like growth factor 2 mRNA-binding protein 1 (IGF2BP1), found in Gallus gallus (Chicken).